A 302-amino-acid chain; its full sequence is Phytoene synthase (302 aa).

The protein belongs to the phytoene/squalene synthase family. The cofactor is ATP. It depends on Mn(2+) as a cofactor. Requires Mg(2+) as cofactor.

It participates in carotenoid biosynthesis; phytoene biosynthesis. Functionally, involved in the biosynthesis of carotenoids. Catalyzes the condensation of two molecules of geranylgeranyl diphosphate (GGPP) to give prephytoene diphosphate (PPPP) and the subsequent rearrangement of the cyclopropylcarbinyl intermediate to yield phytoene. This Mycobacterium bovis (strain ATCC BAA-935 / AF2122/97) protein is Phytoene synthase (crtB).